The chain runs to 385 residues: ATP phosphoribosyltransferase regulatory subunit (385 aa).

The protein belongs to the class-II aminoacyl-tRNA synthetase family. HisZ subfamily. In terms of assembly, heteromultimer composed of HisG and HisZ subunits.

It is found in the cytoplasm. Its pathway is amino-acid biosynthesis; L-histidine biosynthesis; L-histidine from 5-phospho-alpha-D-ribose 1-diphosphate: step 1/9. Functionally, required for the first step of histidine biosynthesis. May allow the feedback regulation of ATP phosphoribosyltransferase activity by histidine. The polypeptide is ATP phosphoribosyltransferase regulatory subunit (Bordetella avium (strain 197N)).